The chain runs to 1043 residues: Integrator complex subunit 3 (1043 aa).

N-acetylmethionine is present on methionine 1. Serine 502, serine 537, and serine 995 each carry phosphoserine. Residues 977–1043 (YEDSSTKPPK…GSSAVGSDSD (67 aa)) form a disordered region. A compositionally biased stretch (acidic residues) spans 1008–1022 (AEEESGSSSASEEED).

Belongs to the Integrator subunit 3 family. Component of the Integrator complex, composed of core subunits INTS1, INTS2, INTS3, INTS4, INTS5, INTS6, INTS7, INTS8, INTS9/RC74, INTS10, INTS11/CPSF3L, INTS12, INTS13, INTS14 and INTS15. The core complex associates with protein phosphatase 2A subunits PPP2CA and PPP2R1A, to form the Integrator-PP2A (INTAC) complex. Component of the SOSS complex, composed of SOSS-B (SOSS-B1/NABP2 or SOSS-B2/NABP1), SOSS-A/INTS3 and SOSS-C/INIP. SOSS complexes containing SOSS-B1/NABP2 are more abundant than complexes containing SOSS-B2/NABP1. Interacts with SOSS-B1/NABP2, SOSS-B2/NABP1 and SOSS-C/INIP; the interaction is direct. Interacts with NBN/NBS1.

It is found in the nucleus. It localises to the cytoplasm. Its function is as follows. Component of the integrator complex, a multiprotein complex that terminates RNA polymerase II (Pol II) transcription in the promoter-proximal region of genes. The integrator complex provides a quality checkpoint during transcription elongation by driving premature transcription termination of transcripts that are unfavorably configured for transcriptional elongation: the complex terminates transcription by (1) catalyzing dephosphorylation of the C-terminal domain (CTD) of Pol II subunit POLR2A/RPB1 and SUPT5H/SPT5, (2) degrading the exiting nascent RNA transcript via endonuclease activity and (3) promoting the release of Pol II from bound DNA. The integrator complex is also involved in terminating the synthesis of non-coding Pol II transcripts, such as enhancer RNAs (eRNAs), small nuclear RNAs (snRNAs), telomerase RNAs and long non-coding RNAs (lncRNAs). Within the integrator complex, INTS3 is involved in the post-termination step: INTS3 binds INTS7 in the open conformation of integrator complex and prevents the rebinding of Pol II to the integrator after termination cycle. Mediates recruitment of cytoplasmic dynein to the nuclear envelope, probably as component of the integrator complex. In terms of biological role, component of the SOSS complex, a multiprotein complex that functions downstream of the MRN complex to promote DNA repair and G2/M checkpoint. The SOSS complex associates with single-stranded DNA at DNA lesions and influences diverse endpoints in the cellular DNA damage response including cell-cycle checkpoint activation, recombinational repair and maintenance of genomic stability. The SOSS complex is required for efficient homologous recombination-dependent repair of double-strand breaks (DSBs) and ATM-dependent signaling pathways. In the SOSS complex, it is required for the assembly of the complex and for stabilization of the complex at DNA damage sites. This Homo sapiens (Human) protein is Integrator complex subunit 3.